We begin with the raw amino-acid sequence, 124 residues long: Glycine cleavage system H protein (124 aa).

Residues Thr19–Lys101 enclose the Lipoyl-binding domain. Residue Lys60 is modified to N6-lipoyllysine.

This sequence belongs to the GcvH family. As to quaternary structure, the glycine cleavage system is composed of four proteins: P, T, L and H. (R)-lipoate serves as cofactor.

Functionally, the glycine cleavage system catalyzes the degradation of glycine. The H protein shuttles the methylamine group of glycine from the P protein to the T protein. This Beijerinckia indica subsp. indica (strain ATCC 9039 / DSM 1715 / NCIMB 8712) protein is Glycine cleavage system H protein.